The following is a 105-amino-acid chain: Nucleoid-associated protein EAT1b_1710 (105 aa).

Positions 1-16 (MRGMGNMNNMMKQMQK) are enriched in low complexity. The disordered stretch occupies residues 1–26 (MRGMGNMNNMMKQMQKMQKDMAKAQE). The span at 17–26 (MQKDMAKAQE) shows a compositional bias: basic and acidic residues.

Belongs to the YbaB/EbfC family. Homodimer.

The protein localises to the cytoplasm. The protein resides in the nucleoid. Its function is as follows. Binds to DNA and alters its conformation. May be involved in regulation of gene expression, nucleoid organization and DNA protection. This is Nucleoid-associated protein EAT1b_1710 from Exiguobacterium sp. (strain ATCC BAA-1283 / AT1b).